The chain runs to 1253 residues: Guanine nucleotide exchange factor SDC25 (1253 aa).

The SH3 domain maps to 26 to 98 (QPIDVVECTY…PPSFTRSILN (73 aa)). Residues 624-649 (LNLDNAKDKKNGSQNTDIQEEEDEYE) are disordered. Positions 782-914 (GPIVRIKGGS…ELLKEVNQKF (133 aa)) constitute an N-terminal Ras-GEF domain. Residues 952 to 1199 (VDPVLFATQL…QYQLSLIIEP (248 aa)) enclose the Ras-GEF domain. A disordered region spans residues 1202 to 1253 (RKKVVPNSNSNNKSQEKSRDDQTDEGKTSTKKDRFPKFQLHKTKKKAPKVSK). Over residues 1215 to 1237 (SQEKSRDDQTDEGKTSTKKDRFP) the composition is skewed to basic and acidic residues. The span at 1240 to 1253 (QLHKTKKKAPKVSK) shows a compositional bias: basic residues.

Its function is as follows. Promotes the exchange of Ras-bound GDP by GTP. The protein is Guanine nucleotide exchange factor SDC25 (SDC25) of Saccharomyces cerevisiae (Baker's yeast).